Here is a 226-residue protein sequence, read N- to C-terminus: 2-amino-5-formylamino-6-ribosylaminopyrimidin-4(3H)-one 5'-monophosphate deformylase (226 aa).

E29, H31, D40, and H108 together coordinate Fe cation.

It belongs to the creatininase superfamily. FAPy deformylase family. Homodimer. Fe(2+) serves as cofactor. The cofactor is Zn(2+).

The enzyme catalyses 2-amino-5-formylamino-6-(5-phospho-D-ribosylamino)pyrimidin-4(3H)-one + H2O = 2,5-diamino-6-(1-D-ribosylamino)pyrimidin-4(3H)-one 5'-phosphate + formate + H(+). The protein operates within cofactor biosynthesis; coenzyme F420 biosynthesis. Its pathway is cofactor biosynthesis; riboflavin biosynthesis. Functionally, catalyzes the hydrolysis of the formamide of 2-amino-5-formylamino-6-ribosylamino-4(3H)-pyrimidinone 5'-monophosphate (FAPy) to form 2,5-diamino-6-ribosylamino-4(3H)-pyrimidinone 5'-phosphate (APy). This chain is 2-amino-5-formylamino-6-ribosylaminopyrimidin-4(3H)-one 5'-monophosphate deformylase, found in Methanocaldococcus vulcanius (strain ATCC 700851 / DSM 12094 / M7) (Methanococcus vulcanius).